We begin with the raw amino-acid sequence, 199 residues long: MACNIPNQRQRTLSTTGEALYEILGLHKGASNEEIKKTYRKLALKHHPDKNPDDPAATEKFKEINNAHAILTDISKRSIYDKYGSLGLYVAEQFGDENVNTYFMLSSWWAKALFVIVGLLTGCYFCCCLCCCCNCCCGHCRPESSVPEEDFYVSPEDLEEQIKSDMEKDVDFPVFLQPTNANEKTQLIKEGSRSYCTDS.

Phosphoserine is present on serine 14. The J domain occupies 19–84 (ALYEILGLHK…SKRSIYDKYG (66 aa)).

As to quaternary structure, interacts with the chaperone complex consisting of HSC70 and SGTA. Post-translationally, palmitoylated. Palmitoylation is not required for membrane association. In terms of tissue distribution, testis specific.

Its subcellular location is the membrane. The polypeptide is DnaJ homolog subfamily C member 5B (DNAJC5B) (Homo sapiens (Human)).